The sequence spans 337 residues: Sideroflexin-4 (337 aa).

Position 2 is an N-acetylserine (serine 2). The next 3 helical transmembrane spans lie at 111-131 (AAFL…LKGI), 133-153 (SVIL…SING), and 165-185 (SLLM…PQFV). N6-acetyllysine is present on lysine 197. A run of 2 helical transmembrane segments spans residues 251-271 (ASRI…TYFF) and 293-313 (VLAM…IGQI).

The protein belongs to the sideroflexin family.

The protein localises to the mitochondrion inner membrane. Mitochondrial amino-acid transporter. Does not act as a serine transporter: not able to mediate transport of serine into mitochondria. The polypeptide is Sideroflexin-4 (Homo sapiens (Human)).